The chain runs to 117 residues: Large ribosomal subunit protein bL20 (117 aa).

It belongs to the bacterial ribosomal protein bL20 family.

Binds directly to 23S ribosomal RNA and is necessary for the in vitro assembly process of the 50S ribosomal subunit. It is not involved in the protein synthesizing functions of that subunit. The chain is Large ribosomal subunit protein bL20 from Geobacter sulfurreducens (strain ATCC 51573 / DSM 12127 / PCA).